The chain runs to 393 residues: Elongation factor Tu (393 aa).

The tr-type G domain maps to 10 to 203 (KPHVNIGTIG…AVDDYIPEPV (194 aa)). The interval 19 to 26 (GHVDHGKT) is G1. 19–26 (GHVDHGKT) lines the GTP pocket. Threonine 26 contacts Mg(2+). Residues 60 to 64 (GITIS) form a G2 region. The interval 81–84 (DCPG) is G3. GTP is bound by residues 81–85 (DCPGH) and 136–139 (NKVD). A G4 region spans residues 136–139 (NKVD). Residues 173–175 (SAL) form a G5 region.

This sequence belongs to the TRAFAC class translation factor GTPase superfamily. Classic translation factor GTPase family. EF-Tu/EF-1A subfamily. As to quaternary structure, monomer.

Its subcellular location is the cytoplasm. It catalyses the reaction GTP + H2O = GDP + phosphate + H(+). In terms of biological role, GTP hydrolase that promotes the GTP-dependent binding of aminoacyl-tRNA to the A-site of ribosomes during protein biosynthesis. The chain is Elongation factor Tu from Chlorobium phaeobacteroides (strain BS1).